The primary structure comprises 205 residues: Holliday junction branch migration complex subunit RuvA (205 aa).

The domain I stretch occupies residues 1-63 (MIGMLRGHVE…QDAITLFGFG (63 aa)). A domain II region spans residues 64–142 (TLASKRMFLQ…LSQIEGSSAT (79 aa)). The segment at 143-145 (AST) is flexible linker. A domain III region spans residues 146 to 205 (PEDTGAEQVVEGLMSLGWHQQDAAHAVQTVCADNQIETPLNAKDVPRVLKLALTSLDRGR).

The protein belongs to the RuvA family. As to quaternary structure, homotetramer. Forms an RuvA(8)-RuvB(12)-Holliday junction (HJ) complex. HJ DNA is sandwiched between 2 RuvA tetramers; dsDNA enters through RuvA and exits via RuvB. An RuvB hexamer assembles on each DNA strand where it exits the tetramer. Each RuvB hexamer is contacted by two RuvA subunits (via domain III) on 2 adjacent RuvB subunits; this complex drives branch migration. In the full resolvosome a probable DNA-RuvA(4)-RuvB(12)-RuvC(2) complex forms which resolves the HJ.

It is found in the cytoplasm. In terms of biological role, the RuvA-RuvB-RuvC complex processes Holliday junction (HJ) DNA during genetic recombination and DNA repair, while the RuvA-RuvB complex plays an important role in the rescue of blocked DNA replication forks via replication fork reversal (RFR). RuvA specifically binds to HJ cruciform DNA, conferring on it an open structure. The RuvB hexamer acts as an ATP-dependent pump, pulling dsDNA into and through the RuvAB complex. HJ branch migration allows RuvC to scan DNA until it finds its consensus sequence, where it cleaves and resolves the cruciform DNA. This is Holliday junction branch migration complex subunit RuvA from Bifidobacterium adolescentis (strain ATCC 15703 / DSM 20083 / NCTC 11814 / E194a).